A 1531-amino-acid polypeptide reads, in one-letter code: Multidrug resistance-associated protein 1 (1531 aa).

Over 1–33 (MALRGFCSADGSDPLWDWNVTWYTSNPDFTKCF) the chain is Extracellular. N-linked (GlcNAc...) asparagine glycosylation is present at N19. The chain crosses the membrane as a helical span at residues 34–54 (QNTVLVWVPCFYLWACFPFYF). Residues 55 to 74 (LYLSRHDRGYIQMTLLNKTK) are Cytoplasmic-facing. A helical transmembrane segment spans residues 75–95 (TALGFLLWIVCWADLFYSFWE). Topologically, residues 96 to 100 (RSRGI) are extracellular. A helical transmembrane segment spans residues 101 to 121 (FLAPVFLVSPTLLGITMLLAT). Residues 122–133 (FLIQLERRKGVQ) are Cytoplasmic-facing. Residues 134–154 (SSGIMLTFWLVALLCALAILR) traverse the membrane as a helical segment. Topologically, residues 155–172 (SKIMTALKEDVQVDLFRD) are extracellular. The helical transmembrane segment at 173-193 (MTFYVYFSLVLIQLVLSCFSD) threads the bilayer. Residues 194–316 (RSPLFSETIH…KEWNPSLFKV (123 aa)) are Cytoplasmic-facing. Residue Y277 is modified to Phosphotyrosine. S289 carries the phosphoserine modification. The helical transmembrane segment at 317–337 (LYKTFGPYFLMSFFFKAIHDL) threads the bilayer. The ABC transmembrane type-1 1 domain occupies 325-608 (FLMSFFFKAI…LPMVISSIVQ (284 aa)). Topologically, residues 338–363 (MMFSGPEILKLLINFVNDTKAPDWQG) are extracellular. The chain crosses the membrane as a helical span at residues 364–384 (YFYTALLFVAACLQTLVLHQY). Residues 385-440 (FHICFVSGMRIKTAVIGAVYRKALVITNAARKSSTVGEIVNLMSVDAQRFMDLATY) lie on the Cytoplasmic side of the membrane. The helical transmembrane segment at 441–461 (INMIWSAPLQVILALYLLWRN) threads the bilayer. Topologically, residues 462-464 (LGP) are extracellular. A helical transmembrane segment spans residues 465–485 (PILAGVAVMVLMVPVNAVMAM). The Cytoplasmic portion of the chain corresponds to 486-547 (KTKTYQVAHM…VLKKSAYLAA (62 aa)). K503 carries the post-translational modification N6-succinyllysine. The helical transmembrane segment at 548-568 (VGTFTWVCTPFLVALCTFAVY) threads the bilayer. At 569–590 (VTIDKNNVLDAQKAFVSLALFN) the chain is on the extracellular side. Residues 591–611 (ILRFPLNILPMVISSIVQASV) form a helical membrane-spanning segment. Residues 612–967 (SLKRLRIFLS…VKLSVYWDYM (356 aa)) lie on the Cytoplasmic side of the membrane. The 225-residue stretch at 644 to 868 (ITVRNATFTW…DGAFAEFLRT (225 aa)) folds into the ABC transporter 1 domain. 678–685 (GQVGCGKS) lines the ATP pocket. Positions 871–893 (SAEQEQDPEDNGVTGVSGPGKEA) are disordered. A phosphoserine mark is found at S905, S915, and S930. The interval 917-938 (SSSYSGDVSRQHNSTAELQKDG) is disordered. Residues 922 to 933 (GDVSRQHNSTAE) are compositionally biased toward polar residues. A helical membrane pass occupies residues 968 to 988 (KAIGLFISFLSIFLFICNHVA). Residues 975 to 1256 (SFLSIFLFIC…LVRMSSEMET (282 aa)) enclose the ABC transmembrane type-1 2 domain. The Extracellular portion of the chain corresponds to 989-1025 (ALASNYWLSLWTDDPIVNGTQEHTKVRLSVYGALGIS). The N-linked (GlcNAc...) asparagine glycan is linked to N1006. The helical transmembrane segment at 1026 to 1046 (QGIAVFGYSMAVSIGGILASR) threads the bilayer. Residues 1047-1089 (CLHVDLLHSILRSPMSFFERTPSGNLVNRFSKELDTVDSMIPE) lie on the Cytoplasmic side of the membrane. Residues 1090-1110 (VIKMFMGSLFNVIGACIVILL) traverse the membrane as a helical segment. A1111 is a topological domain (extracellular). Residues 1112-1132 (TPIAAIIIPPLGLIYFFVQRF) traverse the membrane as a helical segment. Topologically, residues 1133 to 1203 (YVASSRQLKR…VANRWLAVRL (71 aa)) are cytoplasmic. The helical transmembrane segment at 1204–1224 (ECVGNCIVLFAALFAVISRHS) threads the bilayer. Over 1225–1226 (LS) the chain is Extracellular. A helical membrane pass occupies residues 1227-1247 (AGLVGLSVSYSLQVTTYLNWL). Over 1248–1531 (VRMSSEMETN…YNMARDAGLV (284 aa)) the chain is Cytoplasmic. The ABC transporter 2 domain maps to 1293-1527 (VEFRNYCLRY…RGLFYNMARD (235 aa)). 1327 to 1334 (GRTGAGKS) contacts ATP.

This sequence belongs to the ABC transporter superfamily. ABCC family. Conjugate transporter (TC 3.A.1.208) subfamily.

Its subcellular location is the cell membrane. It localises to the basolateral cell membrane. It carries out the reaction ATP + H2O + xenobioticSide 1 = ADP + phosphate + xenobioticSide 2.. The catalysed reaction is an S-substituted glutathione(in) + ATP + H2O = an S-substituted glutathione(out) + ADP + phosphate + H(+). It catalyses the reaction sphing-4-enine 1-phosphate(in) + ATP + H2O = sphing-4-enine 1-phosphate(out) + ADP + phosphate + H(+). The enzyme catalyses leukotriene C4(in) + ATP + H2O = leukotriene C4(out) + ADP + phosphate + H(+). It carries out the reaction 17beta-estradiol 17-O-(beta-D-glucuronate)(in) + ATP + H2O = 17beta-estradiol 17-O-(beta-D-glucuronate)(out) + ADP + phosphate + H(+). The catalysed reaction is daunorubicin(in) + ATP + H2O = daunorubicin(out) + ADP + phosphate + H(+). It catalyses the reaction vincristine(in) + ATP + H2O = vincristine(out) + ADP + phosphate + H(+). The enzyme catalyses 2',3'-cGAMP(in) + ATP + H2O = 2',3'-cGAMP(out) + ADP + phosphate + H(+). It carries out the reaction S-[(2E,6E,10E)-geranylgeranyl]-L-glutathione(in) + ATP + H2O = S-[(2E,6E,10E)-geranylgeranyl]-L-glutathione(out) + ADP + phosphate + H(+). The catalysed reaction is prostaglandin A2-S-(R)-glutathione(in) + ATP + H2O = prostaglandin A2-S-(R)-glutathione(out) + ADP + phosphate + H(+). It catalyses the reaction prostaglandin A2-S-(S)-glutathione(in) + ATP + H2O = prostaglandin A2-S-(S)-glutathione(out) + ADP + phosphate + H(+). With respect to regulation, MK 571 inhibits sphingosine 1-phosphate and leukotriene C4 export. Functionally, mediates export of organic anions and drugs from the cytoplasm. Mediates ATP-dependent transport of glutathione and glutathione conjugates, leukotriene C4, estradiol-17-beta-o-glucuronide, methotrexate, antiviral drugs and other xenobiotics. Confers resistance to anticancer drugs by decreasing accumulation of drug in cells, and by mediating ATP- and GSH-dependent drug export. Hydrolyzes ATP with low efficiency. Catalyzes the export of sphingosine 1-phosphate from mast cells independently of their degranulation. Participates in inflammatory response by allowing export of leukotriene C4 from leukotriene C4-synthesizing cells. Mediates ATP-dependent, GSH-independent cyclic GMP-AMP (cGAMP) export. Thus, by limiting intracellular cGAMP concentrations negatively regulates the cGAS-STING pathway. Exports S-geranylgeranyl-glutathione (GGG) in lymphoid cells and stromal compartments of lymphoid organs. ABCC1 (via extracellular transport) with GGT5 (via GGG catabolism) establish GGG gradients within lymphoid tissues to position P2RY8-positive lymphocytes at germinal centers in lymphoid follicles and restrict their chemotactic transmigration from blood vessels to the bone marrow parenchyma. Mediates basolateral export of GSH-conjugated R- and S-prostaglandin A2 diastereomers in polarized epithelial cells. The polypeptide is Multidrug resistance-associated protein 1 (Macaca fascicularis (Crab-eating macaque)).